Here is a 975-residue protein sequence, read N- to C-terminus: Synaptopodin 2-like protein (975 aa).

Residues 6–85 (EVQVTLAGGA…QLVLTVRRVT (80 aa)) enclose the PDZ domain. 3 disordered regions span residues 18–41 (GFRLQGGTEQRKPLQIRRRSQAGR), 86–214 (DEGS…PAEA), and 314–349 (AGTGTEEEDGIPPTSESELDEETFSDARSLTNQSDW). 2 positions are modified to phosphoserine: S105 and S108. Position 138 is a phosphothreonine (T138). S140, S163, S175, and S177 each carry phosphoserine. Positions 187 to 200 (GSPSQGDSRVSSPS) are enriched in polar residues. The segment covering 202 to 214 (EEGAALQPPPAEA) has biased composition (low complexity). The span at 339-349 (DARSLTNQSDW) shows a compositional bias: polar residues. Phosphoserine is present on residues S342, S347, S371, S378, and S381. Omega-N-methylarginine is present on residues R383, R463, R466, and R476. Residues 491–649 (KVNEGLGSTS…ETKNSPNPEL (159 aa)) form a disordered region. Residues 502-516 (APSPFAAPPQGPTPL) are compositionally biased toward pro residues. The span at 519–528 (FTTVVPSHTP) shows a compositional bias: polar residues. Low complexity-rich tracts occupy residues 530–540 (SGASSSTQRSS) and 571–580 (SAAAMTSTAS). A phosphoserine mark is found at S667 and S675. Residues 687-731 (LGGRSYKTLPQVSPKTPPPMAPKTPPPTTPKTPPPVAPKPGSRGL) form a disordered region. Positions 701-724 (KTPPPMAPKTPPPTTPKTPPPVAP) are enriched in pro residues. A phosphothreonine mark is found at T702 and T710. Omega-N-methylarginine is present on R754. The disordered stretch occupies residues 772-797 (EATSGSSLNPGLRPRSPSPTPSLPPS). Phosphoserine occurs at positions 787 and 789. The residue at position 791 (T791) is a Phosphothreonine. An omega-N-methylarginine mark is found at R805, R825, and R888. S890 carries the phosphoserine modification. T891 and T897 each carry phosphothreonine. Omega-N-methylarginine is present on R909. R920 carries the post-translational modification Asymmetric dimethylarginine; alternate. R920 bears the Omega-N-methylarginine; alternate mark. 2 positions are modified to omega-N-methylarginine: R953 and R955.

It belongs to the synaptopodin family.

It localises to the cytoplasm. It is found in the cytoskeleton. Its function is as follows. Actin-associated protein that may play a role in modulating actin-based shape. The chain is Synaptopodin 2-like protein (Synpo2l) from Mus musculus (Mouse).